A 217-amino-acid chain; its full sequence is Small ribosomal subunit protein uS3 (217 aa).

In terms of domain architecture, KH type-2 spans 38-106; that stretch reads IRKFINKELA…QVHINIIEIK (69 aa).

Belongs to the universal ribosomal protein uS3 family. Part of the 30S ribosomal subunit. Forms a tight complex with proteins S10 and S14.

In terms of biological role, binds the lower part of the 30S subunit head. Binds mRNA in the 70S ribosome, positioning it for translation. The chain is Small ribosomal subunit protein uS3 from Streptococcus equi subsp. equi (strain 4047).